We begin with the raw amino-acid sequence, 389 residues long: Fructose-1,6-bisphosphate aldolase/phosphatase (389 aa).

The Proton acceptor; for FBP phosphatase activity role is filled by Asp17. Positions 17, 24, 57, and 58 each coordinate Mg(2+). Position 24 (His24) interacts with beta-D-fructose 1,6-bisphosphate. His24 is a dihydroxyacetone phosphate binding site. Beta-D-fructose 1,6-bisphosphate is bound at residue Tyr95. Gln99 provides a ligand contact to Mg(2+). 108-109 (GN) lines the beta-D-fructose 1,6-bisphosphate pocket. Asp136 is a Mg(2+) binding site. Lys137 lines the beta-D-fructose 1,6-bisphosphate pocket. Dihydroxyacetone phosphate is bound at residue Lys137. Tyr233 functions as the Proton donor/acceptor; for FBP aldolase activity in the catalytic mechanism. The Mg(2+) site is built by Lys236, Asp237, and Asp238. Catalysis depends on Lys236, which acts as the Schiff-base intermediate with DHAP; for FBP aldolase activity. Beta-D-fructose 1,6-bisphosphate-binding positions include 246–247 (QS), Arg270, Asp291, and Tyr352. Positions 270 and 291 each coordinate dihydroxyacetone phosphate.

It belongs to the FBP aldolase/phosphatase family. In terms of assembly, homooctamer; dimer of tetramers. Mg(2+) is required as a cofactor.

The enzyme catalyses beta-D-fructose 1,6-bisphosphate + H2O = beta-D-fructose 6-phosphate + phosphate. It catalyses the reaction beta-D-fructose 1,6-bisphosphate = D-glyceraldehyde 3-phosphate + dihydroxyacetone phosphate. It functions in the pathway carbohydrate biosynthesis; gluconeogenesis. In terms of biological role, catalyzes two subsequent steps in gluconeogenesis: the aldol condensation of dihydroxyacetone phosphate (DHAP) and glyceraldehyde-3-phosphate (GA3P) to fructose-1,6-bisphosphate (FBP), and the dephosphorylation of FBP to fructose-6-phosphate (F6P). The sequence is that of Fructose-1,6-bisphosphate aldolase/phosphatase from Methanocaldococcus jannaschii (strain ATCC 43067 / DSM 2661 / JAL-1 / JCM 10045 / NBRC 100440) (Methanococcus jannaschii).